The following is a 394-amino-acid chain: Hemagglutinin-esterase (394 aa).

The first 16 residues, 1 to 16 (MARFIILFLLLAPVYS), serve as a signal peptide directing secretion. Topologically, residues 17 to 347 (RLCLRNHPDT…NNRVDAIPPQ (331 aa)) are extracellular. The active site involves serine 32. A Cell attachment site motif is present at residues 119–121 (RGD). Residues aspartate 261 and histidine 264 contribute to the active site. Asparagine 333 carries N-linked (GlcNAc...) asparagine; by host glycosylation. Residues 335–358 (TDVNNRVDAIPPQLSNIFISMGVA) are highly polymorphic region. A helical membrane pass occupies residues 348–368 (LSNIFISMGVAGFGIALFLAG). Over 369 to 394 (WKACVWIAAFMYKSRGRNPPANLSVA) the chain is Cytoplasmic.

It is found in the host membrane. The protein localises to the virion membrane. It carries out the reaction N-acetyl-9-O-acetylneuraminate + H2O = N-acetylneuraminate + acetate + H(+). The enzyme catalyses N-acetyl-4-O-acetylneuraminate + H2O = N-acetylneuraminate + acetate + H(+). Performs attachment to host receptor thereby inducing virus particle entry into target cell. Binds specifically to 5-N-acetyl-4-O-acetyl neuraminic acid on host cells, which plays a major role in cell tropism of the virus. ALso mediates de-O-acetylation of N-acetyl-4-O-acetylneuraminic acid. This receptor-destroying activity is important for virus release as it probably helps preventing self-aggregation and ensures the efficient spread of the progeny virus from cell to cell. The highly polymorphic region (HPR) modulates the virulence in host. Catalyzes the removal of terminal sialic acid residues from viral and cellular glycoconjugates. This is Hemagglutinin-esterase from Gadus morhua (Atlantic cod).